Consider the following 5801-residue polypeptide: uncharacterized protein (5801 aa).

Disordered stretches follow at residues 1114-1136, 1827-1846, 2040-2109, 3351-3392, 5134-5168, 5478-5573, and 5600-5638; these read DDDN…NKKI, KDRS…SINN, NNGE…SPLF, EKSN…NNSG, DNNN…SESD, ISDP…EDII, and HDKD…ETPG. 5 stretches are compositionally biased toward low complexity: residues 1118-1134, 1831-1846, 2048-2096, 3353-3392, and 5135-5153; these read NNSN…NNNK, SSSS…SINN, QQLQ…QQQQ, SNNN…NNSG, and NNNN…NNNN. Residues 5496-5573 are compositionally biased toward acidic residues; the sequence is DNEEEEEDDD…EDEDEDEDII (78 aa). Over residues 5617 to 5629 the composition is skewed to basic and acidic residues; the sequence is QQPEKPQQPEKPQ.

This is an uncharacterized protein from Dictyostelium discoideum (Social amoeba).